The following is a 543-amino-acid chain: ADIPOR-like receptor IZH3 (543 aa).

At 1 to 259 the chain is on the lumenal side; it reads MMDSSSKSLT…NWYGWHNETS (259 aa). Asparagine 45, asparagine 123, asparagine 153, and asparagine 256 each carry an N-linked (GlcNAc...) asparagine glycan. A helical membrane pass occupies residues 260–280; sequence NIWSHLLGAIYIIYLAIYDFP. At 281–295 the chain is on the cytoplasmic side; it reads QSEVWRNSQVPPQAR. A helical transmembrane segment spans residues 296–316; that stretch reads WIVFMFLAAALKCMLSSVFWH. The Lumenal portion of the chain corresponds to 317 to 330; it reads TFNGTSFLKLRSKF. An N-linked (GlcNAc...) asparagine glycan is attached at asparagine 319. The chain crosses the membrane as a helical span at residues 331–353; that stretch reads ACVDYSGITILITASILTTEFVT. Residues 354–357 are Cytoplasmic-facing; that stretch reads MYSC. A helical membrane pass occupies residues 358–378; sequence YWAMYTYMSISLALGVFGVFM. Over 379–395 the chain is Lumenal; sequence NWSPRFDRPEARPLRIR. The helical transmembrane segment at 396–416 threads the bilayer; that stretch reads FFILLATMGVLSFLHLIFLTD. Residues 417 to 425 lie on the Cytoplasmic side of the membrane; sequence LHYAATLFS. Residues 426–446 form a helical membrane-spanning segment; it reads PVTYKSVVWYLVGVVFYGSFI. The Lumenal portion of the chain corresponds to 447 to 505; it reads PERFRSDVQVDKTIPTNYELSTDLEIITKQREIHFREVPTAHSKCSSCPSHAKSFKSLW. Residues 506–526 traverse the membrane as a helical segment; it reads WVDYFGCSHTFWHFFVVLGVI. Residues 527–543 are Cytoplasmic-facing; the sequence is GHYRAILDMFAKRWILS.

Belongs to the ADIPOR family.

It localises to the endoplasmic reticulum membrane. ADIPOR-like receptor involved in zinc metabolism either by altering membrane sterol content or by directly altering cellular zinc levels. The protein is ADIPOR-like receptor IZH3 (IZH3) of Saccharomyces cerevisiae (strain ATCC 204508 / S288c) (Baker's yeast).